Reading from the N-terminus, the 409-residue chain is MTQTNFRSGPDANGLFGSFGGRYVAETLMPLVLDLNREYEAAKADPEFIKEMAYFQRDYIGRPNPLYFAERLTEFCGGAKIYFKREELNHTGAHKINNCIGQVLLAKRMGKKRLIAETGAGMHGVATATVAARFGLPCVIYMGATDIERQQANVFRMKLLGAEIVPVTSGTGTLKDAMNEALRDWVTNVDDTFYLIGTVAGPHPYPAMVRDFQSVIGKETKEQMQEKEGRLPDSLIACVGGGSNAMGLFHPFLDDASVEIIGVEAGGHGVDTDKHAASLNGGVPGVLHGNRTYLLQDNDGQITDAHSISAGLDYPGIGPEHAYLHEVKRVEYVSITDEEALDAFHQCCLLEGIIPALETAHALAEAMKRATNLRDDHLMVVCLSGRGDKDMQTVMNHMAAADNTQEKLV.

Position 95 is an N6-(pyridoxal phosphate)lysine (lysine 95).

It belongs to the TrpB family. As to quaternary structure, tetramer of two alpha and two beta chains. The cofactor is pyridoxal 5'-phosphate.

It carries out the reaction (1S,2R)-1-C-(indol-3-yl)glycerol 3-phosphate + L-serine = D-glyceraldehyde 3-phosphate + L-tryptophan + H2O. It participates in amino-acid biosynthesis; L-tryptophan biosynthesis; L-tryptophan from chorismate: step 5/5. The beta subunit is responsible for the synthesis of L-tryptophan from indole and L-serine. In Pseudomonas syringae pv. tomato (strain ATCC BAA-871 / DC3000), this protein is Tryptophan synthase beta chain.